The primary structure comprises 659 residues: Pentatricopeptide repeat-containing protein At3g26782, mitochondrial (659 aa).

Residues 1–24 constitute a mitochondrion transit peptide; that stretch reads MKVRSKKALFCSVSRLLHTERHTE. PPR repeat units lie at residues 40-74, 75-109, 110-144, 145-171, 182-216, 217-249, 250-284, 286-320, 321-351, 352-386, 387-422, and 423-453; these read DVFSWNSVIADLARSGDSAEALLAFSSMRKLSLYP, TRSSFPCAIKACSSLFDIFSGKQTHQQAFVFGYQS, DIFVSSALIVMYSTCGKLEDARKVFDEIPKRNIVS, WTSMIRGYDLNGNALDAVSLFKDLLVD, DSMGLVSVISACSRVPAKGLTESIHSFVIKRGFDR, GVSVGNTLLDAYAKGGEGGVAVARKIFDQIVDK, DRVSYNSIMSVYAQSGMSNEAFEVFRRLVKNKVVT, NAITLSTVLLAVSHSGALRIGKCIHDQVIRMGLED, DVIVGTSIIDMYCKCGRVETARKAFDRMKNK, NVRSWTAMIAGYGMHGHAAKALELFPAMIDSGVRP, NYITFVSVLAACSHAGLHVEGWRWFNAMKGRFGVEP, and GLEHYGCMVDLLGRAGFLQKAYDLIQRMKMK. The tract at residues 458-533 is type E motif; sequence IWSSLLAACR…PPGFSLLELN (76 aa). Positions 534–564 are type E(+) motif; it reads GEVHVFLIGDEEHPQREKIYEFLAELNRKLL. The segment at 565 to 659 is type DYW motif; sequence EAGYVSNTSS…DGGCSCGDYW (95 aa).

Belongs to the PPR family. PCMP-H subfamily.

The protein localises to the mitochondrion. In Arabidopsis thaliana (Mouse-ear cress), this protein is Pentatricopeptide repeat-containing protein At3g26782, mitochondrial (PCMP-H34).